Consider the following 573-residue polypeptide: Splicing factor U2af large subunit A (573 aa).

Residues 1-175 (MSEFEDHEGN…KSKQRVSGFD (175 aa)) form a disordered region. Basic and acidic residues predominate over residues 22–93 (NGGRDGEIED…ERSRDKDRDH (72 aa)). The span at 94–105 (RERHHRSSRHRD) shows a compositional bias: basic residues. Over residues 106-141 (HSRERGERRERGGRDDDDYRRSRDRDHDRRRDDRGG) the composition is skewed to basic and acidic residues. The span at 159–169 (TRSRSPSKSKQ) shows a compositional bias: basic residues. 3 RRM domains span residues 239 to 322 (RRVY…RPSD), 359 to 437 (DRIF…RANQ), and 478 to 564 (QVVT…YPED).

It belongs to the splicing factor SR family. As to quaternary structure, component of the spliceosome. Interacts with SUA. Interacts with SF1 in the nucleus.

It is found in the nucleus. Functionally, necessary for the splicing of pre-mRNA. In Arabidopsis thaliana (Mouse-ear cress), this protein is Splicing factor U2af large subunit A.